A 365-amino-acid polypeptide reads, in one-letter code: tRNA-specific 2-thiouridylase MnmA (365 aa).

ATP-binding positions include 14-21 (AMSGGVDS) and L40. Residue C108 is the Nucleophile of the active site. An intrachain disulfide couples C108 to C204. Position 132 (G132) interacts with ATP. The segment at 154-156 (KDQ) is interaction with tRNA. C204 acts as the Cysteine persulfide intermediate in catalysis.

This sequence belongs to the MnmA/TRMU family.

The protein localises to the cytoplasm. The enzyme catalyses S-sulfanyl-L-cysteinyl-[protein] + uridine(34) in tRNA + AH2 + ATP = 2-thiouridine(34) in tRNA + L-cysteinyl-[protein] + A + AMP + diphosphate + H(+). In terms of biological role, catalyzes the 2-thiolation of uridine at the wobble position (U34) of tRNA, leading to the formation of s(2)U34. This chain is tRNA-specific 2-thiouridylase MnmA, found in Rickettsia akari (strain Hartford).